The sequence spans 651 residues: MBT domain-containing protein 1 (651 aa).

The disordered stretch occupies residues 21–55 (SFGMFDGYDSCSEDTSSSSSSDESEEEVAPLPSSL). Over residues 29–41 (DSCSEDTSSSSSS) the composition is skewed to low complexity. Residues 68 to 103 (PDGKSGMATCEMCGMVGVRDAFYSKTKRFCSVSCSR) form an FCS-type zinc finger. 4 residues coordinate Zn(2+): Cys77, Cys80, Cys97, and Cys101. 4 MBT repeats span residues 164–268 (FSWG…LVPP), 276–373 (TNWK…IGHR), 374–479 (FKRT…LTPP), and 487–583 (FKWF…LQPP). 2 disordered regions span residues 581–610 (QPPAPQSNKDSQSNISKQKKKSKSQPYKGH) and 629–651 (TFLQGASDQESNGSGSYYIKQEP). The span at 586–596 (QSNKDSQSNIS) shows a compositional bias: low complexity. The segment covering 597 to 610 (KQKKKSKSQPYKGH) has biased composition (basic residues). The segment covering 632-643 (QGASDQESNGSG) has biased composition (polar residues).

Monomer. Component of the NuA4 histone acetyltransferase complex.

The protein resides in the nucleus. The protein localises to the chromosome. In terms of biological role, chromatin reader component of the NuA4 histone acetyltransferase complex, a multiprotein complex involved in transcriptional activation of select genes principally by acetylation of nucleosomal histones H4 and H2A. The NuA4 complex plays a direct role in repair of DNA double-strand breaks (DSBs) by promoting homologous recombination (HR). MBTD1 specifically recognizes and binds monomethylated and dimethylated 'Lys-20' on histone H4 (H4K20me1 and H4K20me2, respectively). In the NuA4 complex, MBTD1 promotes recruitment of the complex to H4K20me marks by competing with TP53BP1 for binding to H4K20me. Following recruitment to H4K20me at DNA breaks, the NuA4 complex catalyzes acetylation of 'Lys-15' on histone H2A (H2AK15), blocking the ubiquitination mark required for TP53BP1 localization at DNA breaks, thereby promoting homologous recombination (HR). The chain is MBT domain-containing protein 1 from Xenopus tropicalis (Western clawed frog).